A 405-amino-acid polypeptide reads, in one-letter code: Tryptophan synthase beta chain (405 aa).

Lys95 is modified (N6-(pyridoxal phosphate)lysine).

It belongs to the TrpB family. In terms of assembly, tetramer of two alpha and two beta chains. Pyridoxal 5'-phosphate serves as cofactor.

The catalysed reaction is (1S,2R)-1-C-(indol-3-yl)glycerol 3-phosphate + L-serine = D-glyceraldehyde 3-phosphate + L-tryptophan + H2O. The protein operates within amino-acid biosynthesis; L-tryptophan biosynthesis; L-tryptophan from chorismate: step 5/5. Its function is as follows. The beta subunit is responsible for the synthesis of L-tryptophan from indole and L-serine. In Pseudomonas putida (Arthrobacter siderocapsulatus), this protein is Tryptophan synthase beta chain (trpB).